The following is a 396-amino-acid chain: ATP-dependent RNA helicase eIF4A (396 aa).

Positions 23–51 (YEFDDMNLNEKLLRGVFGYGFNKPSAIQQ) match the Q motif motif. Residues 54 to 223 (IMPIIEGNDV…AKFMQNPVRI (170 aa)) form the Helicase ATP-binding domain. Residue 67–74 (AQSGTGKT) coordinates ATP. Positions 171 to 174 (DEAD) match the DEAD box motif. The 162-residue stretch at 234–395 (GIKQFYVNVE…ELPSDIGTLF (162 aa)) folds into the Helicase C-terminal domain.

This sequence belongs to the DEAD box helicase family. eIF4A subfamily. Component of the eIF4F complex, which composition varies with external and internal environmental conditions. It is composed of at least eIF4A, eIF4E and eIF4G.

Its subcellular location is the cytoplasm. The enzyme catalyses ATP + H2O = ADP + phosphate + H(+). Functionally, ATP-dependent RNA helicase which is a subunit of the eIF4F complex involved in cap recognition and is required for mRNA binding to ribosome. In the current model of translation initiation, eIF4A unwinds RNA secondary structures in the 5'-UTR of mRNAs which is necessary to allow efficient binding of the small ribosomal subunit, and subsequent scanning for the initiator codon. This is ATP-dependent RNA helicase eIF4A (TIF1) from Candida glabrata (strain ATCC 2001 / BCRC 20586 / JCM 3761 / NBRC 0622 / NRRL Y-65 / CBS 138) (Yeast).